Reading from the N-terminus, the 376-residue chain is Lactosylceramide 1,3-N-acetyl-beta-D-glucosaminyltransferase (376 aa).

Residues Met-1–Lys-13 are Cytoplasmic-facing. The helical; Signal-anchor for type II membrane protein transmembrane segment at Ile-14–Asn-34 threads the bilayer. The Lumenal portion of the chain corresponds to Asn-35–Ala-376. Residue Asn-57 is glycosylated (N-linked (GlcNAc...) asparagine).

It belongs to the glycosyltransferase 31 family. Highly expressed in adult spleen, placenta and cerebellar Purkinje cells where it colocalizes with HNK-1. Expressed at lower level in brain, lung, thymus and muscle.

It localises to the golgi apparatus membrane. It catalyses the reaction a beta-D-Gal-(1-&gt;4)-beta-D-Glc-(1&lt;-&gt;1)-Cer(d18:1(4E)) + UDP-N-acetyl-alpha-D-glucosamine = a beta-D-GlcNAc-(1-&gt;3)-beta-D-Gal-(1-&gt;4)-beta-D-Glc-(1&lt;-&gt;1)-Cer(d18:1(4E)) + UDP + H(+). It carries out the reaction a neolactoside nLc4Cer(d18:1(4E)) + UDP-N-acetyl-alpha-D-glucosamine = a neolactoside IV(3)-beta-GlcNAc-nLc4Cer(d18:1(4E)) + UDP + H(+). The protein operates within protein modification; protein glycosylation. Its function is as follows. Beta-1,3-N-acetylglucosaminyltransferase that plays a key role in the synthesis of lacto- or neolacto-series carbohydrate chains on glycolipids, notably by participating in biosynthesis of HNK-1 and Lewis X carbohydrate structures. Has strong activity toward lactosylceramide (LacCer) and neolactotetraosylceramide (nLc(4)Cer; paragloboside), resulting in the synthesis of Lc(3)Cer and neolactopentaosylceramide (nLc(5)Cer), respectively. Plays a central role in regulating neolacto-series glycolipid synthesis during embryonic development. This chain is Lactosylceramide 1,3-N-acetyl-beta-D-glucosaminyltransferase, found in Mus musculus (Mouse).